Consider the following 429-residue polypeptide: Ribosomal RNA small subunit methyltransferase B (429 aa).

S-adenosyl-L-methionine contacts are provided by residues 254 to 260 (CAAPGGK), D277, D303, and D322. C375 serves as the catalytic Nucleophile.

It belongs to the class I-like SAM-binding methyltransferase superfamily. RsmB/NOP family.

The protein localises to the cytoplasm. The enzyme catalyses cytidine(967) in 16S rRNA + S-adenosyl-L-methionine = 5-methylcytidine(967) in 16S rRNA + S-adenosyl-L-homocysteine + H(+). Functionally, specifically methylates the cytosine at position 967 (m5C967) of 16S rRNA. The sequence is that of Ribosomal RNA small subunit methyltransferase B from Shigella flexneri.